The chain runs to 308 residues: UPF0282 protein PYRAB09800 (308 aa).

It belongs to the UPF0282 family.

In Pyrococcus abyssi (strain GE5 / Orsay), this protein is UPF0282 protein PYRAB09800.